Reading from the N-terminus, the 316-residue chain is GTPase Era (316 aa).

Residues 9–190 (RAGFAAIIGA…TAKLVSMMPE (182 aa)) enclose the Era-type G domain. Positions 17-24 (GAPNAGKS) are G1. 17–24 (GAPNAGKS) serves as a coordination point for GTP. Positions 43–47 (QTTRF) are G2. The interval 64-67 (DTPG) is G3. Residues 64–68 (DTPGI) and 140–143 (NKID) contribute to the GTP site. Residues 140 to 143 (NKID) are G4. The G5 stretch occupies residues 169–171 (ISA). The region spanning 221–298 (VHEELPYAAT…HLFLHVKVKE (78 aa)) is the KH type-2 domain.

The protein belongs to the TRAFAC class TrmE-Era-EngA-EngB-Septin-like GTPase superfamily. Era GTPase family. Monomer.

Its subcellular location is the cytoplasm. The protein localises to the cell inner membrane. In terms of biological role, an essential GTPase that binds both GDP and GTP, with rapid nucleotide exchange. Plays a role in 16S rRNA processing and 30S ribosomal subunit biogenesis and possibly also in cell cycle regulation and energy metabolism. This chain is GTPase Era, found in Caulobacter vibrioides (strain ATCC 19089 / CIP 103742 / CB 15) (Caulobacter crescentus).